The primary structure comprises 232 residues: Dehydrogenase OXI1 (232 aa).

A signal peptide spans 1–20 (MTETFKVAITFVSPSSEALA). Residue leucine 19 participates in NADP(+) binding. N-linked (GlcNAc...) asparagine glycosylation is present at asparagine 28. Residues aspartate 42, asparagine 70, and lysine 103 each coordinate NADP(+). Asparagine 117 carries an N-linked (GlcNAc...) asparagine glycan. Active-site proton donor residues include serine 119 and serine 121. NADP(+)-binding residues include tyrosine 133, lysine 137, and threonine 168. Tyrosine 133 (proton acceptor) is an active-site residue. The active-site Lowers pKa of active site Tyr is lysine 137.

This sequence belongs to the short-chain dehydrogenases/reductases (SDR) family.

It catalyses the reaction a primary alcohol + NAD(+) = an aldehyde + NADH + H(+). The catalysed reaction is a secondary alcohol + NAD(+) = a ketone + NADH + H(+). It functions in the pathway mycotoxin biosynthesis. Dehydrogenase; part of the Tox1A locus, one of the 2 loci that mediate the biosynthesis of T-toxin, a family of linear polyketides 37 to 45 carbons in length, of which the major component is 41 carbons, and which leads to high virulence to maize. One of the PKSs (PKS1 or PKS2) could synthesize a precursor, used subsequently by the other PKS as starter unit, to add additional carbons. Variability in the length of the final carbon backbone C35-47 could be achieved by varying the number of condensation cycles, or use of different starter or extender units or might be due to decarboxylation of the penultimate product, catalyzed by DEC1. Additional proteins are required for the biosynthesis of T-toxin, including oxidoreductases RED1, RED2, RED3, LAM1 and OXI1, as well as esterase TOX9. In Cochliobolus heterostrophus (strain C4 / ATCC 48331 / race T) (Southern corn leaf blight fungus), this protein is Dehydrogenase OXI1.